A 365-amino-acid chain; its full sequence is D-alanine--D-alanine ligase (365 aa).

The region spanning 135–345 is the ATP-grasp domain; the sequence is KLLLKSFNIP…YESLVDNLVS (211 aa). 168 to 223 contacts ATP; sequence KQSLNYPVIVKPAMLGSSIGISIAYNDTQIEKCIEEAFEYDLTVVVEKFMKVREIE. Mg(2+) contacts are provided by aspartate 298, glutamate 312, and asparagine 314.

This sequence belongs to the D-alanine--D-alanine ligase family. Mg(2+) serves as cofactor. The cofactor is Mn(2+).

It localises to the cytoplasm. The catalysed reaction is 2 D-alanine + ATP = D-alanyl-D-alanine + ADP + phosphate + H(+). The protein operates within cell wall biogenesis; peptidoglycan biosynthesis. In terms of biological role, cell wall formation. The sequence is that of D-alanine--D-alanine ligase from Borrelia hermsii (strain HS1 / DAH).